Reading from the N-terminus, the 28-residue chain is NSEDGSPYPGPGQQPNCCKWPIVTCCNR.

It belongs to the conotoxin T superfamily. In terms of processing, contains 2 disulfide bonds that can be either 'C1-C3, C2-C4' or 'C1-C4, C2-C3', since these disulfide connectivities have been observed for conotoxins with cysteine framework V (for examples, see AC P0DQQ7 and AC P81755). As to expression, expressed by the venom duct.

The protein localises to the secreted. This Californiconus californicus (California cone) protein is Conotoxin Cl5.3.